The sequence spans 429 residues: MKLYNLKDHNEQVSFAQAIKQGLGKQQGLFFPLDLPEFELTEIDHLLEQDFVTRSSRILSAFIGEEVPETALKKRVQAAFEFPAPVAKVTDDVSCLELFHGPTLAFKDFGGRFMAQMLAEVAGEQPVTILTATSGDTGAAVAHAFYGLKNVRVVILYPQGKISPLQEKLFCTLGGNIHTVAIDGDFDACQALVKQAFDDQELKDALHLNSANSINISRLLAQICYYFEAVAQLPQEARNQLVISVPSGNFGDLTAGLLAKSLGLPVKRFIAATNANDTVPRFLTSGQWQPHATVATLSNAMDVSQPNNWPRVEELFRRKVWQLKELGHAAVSDETTKDTMRELAELGYISEPHAAIAYRALRDQLQEGEFGLFLGTAHPAKFKESVEAILGQELPLPKALALRAELPLLSHTLPASFGELRKFLMGLPA.

An N6-(pyridoxal phosphate)lysine modification is found at Lys-107.

This sequence belongs to the threonine synthase family. The cofactor is pyridoxal 5'-phosphate.

The catalysed reaction is O-phospho-L-homoserine + H2O = L-threonine + phosphate. It functions in the pathway amino-acid biosynthesis; L-threonine biosynthesis; L-threonine from L-aspartate: step 5/5. Functionally, catalyzes the gamma-elimination of phosphate from L-phosphohomoserine and the beta-addition of water to produce L-threonine. The protein is Threonine synthase (thrC) of Serratia marcescens.